A 503-amino-acid polypeptide reads, in one-letter code: Ell-associated factor Eaf (503 aa).

Composition is skewed to polar residues over residues 143–158 and 170–189; these read PGQQ…TNVA and ENST…SRRN. Disordered regions lie at residues 143–223 and 251–503; these read PGQQ…PAWD and NGSQ…EDDD. Ser199 is subject to Phosphoserine. Positions 251-264 are enriched in polar residues; the sequence is NGSQANTSGSSTGS. The span at 281-296 shows a compositional bias: basic residues; that stretch reads GKQRQAPHHGHAKRQQ. Polar residues predominate over residues 297–311; that stretch reads RSSPPMVQQQPNFGR. Over residues 312-326 the composition is skewed to low complexity; it reads NSYNGGNNYAQQQQH. Over residues 382-397 the composition is skewed to acidic residues; sequence DSSDSDSGSDSDDSTE. Composition is skewed to low complexity over residues 415–435 and 484–497; these read MHHQ…QQQH and NDLL…SSNS.

The protein belongs to the EAF family.

The protein localises to the nucleus. Promotes transcriptional elongation by Su(Tpl)/ELL. Essential for development. The polypeptide is Ell-associated factor Eaf (Drosophila ananassae (Fruit fly)).